Reading from the N-terminus, the 417-residue chain is Solute carrier family 25 member 46-A (417 aa).

Over residues 1 to 13 (MQPRRPDRFDGLE) the composition is skewed to basic and acidic residues. The tract at residues 1 to 90 (MQPRRPDRFD…AFGEENSNSA (90 aa)) is disordered. The segment covering 31–41 (SSFPARSFSSS) has biased composition (low complexity). Residues 95–186 (QLNRFAGFGI…GILSEFTHLP (92 aa)) form a Solcar 1 repeat. 6 helical membrane-spanning segments follow: residues 102–122 (FGIG…CIVL), 162–182 (MGST…LSEF), 198–218 (IGGH…FYSA), 257–277 (LLPL…HYIV), 313–333 (FPEL…LYPL), and 382–402 (LGFY…AIVL). The stretch at 310 to 415 (EDYFPELIAN…KIIYSSVVQT (106 aa)) is one Solcar 2 repeat.

It belongs to the mitochondrial carrier (TC 2.A.29) family.

The protein localises to the mitochondrion outer membrane. Functionally, may play a role in mitochondrial dynamics by controlling mitochondrial membrane fission. This is Solute carrier family 25 member 46-A (slc25a46-a) from Xenopus laevis (African clawed frog).